Reading from the N-terminus, the 682-residue chain is Heat shock 70 kDa protein, mitochondrial (682 aa).

The N-terminal 57 residues, 1 to 57 (MATAALLRSLRRREFATSSISAYRTLASNTKPSWCPSLVGAKWAGLARPFSSKPAGN), are a transit peptide targeting the mitochondrion. The interval 649 to 682 (GEHMAGGSSGGASGGGGAQGGDQPPEAEYEEVKK) is disordered. Positions 655–668 (GSSGGASGGGGAQG) are enriched in gly residues. A compositionally biased stretch (acidic residues) spans 673-682 (PEAEYEEVKK).

The protein belongs to the heat shock protein 70 family.

It is found in the mitochondrion. This is Heat shock 70 kDa protein, mitochondrial (HSP68) from Solanum tuberosum (Potato).